A 282-amino-acid polypeptide reads, in one-letter code: Formamidopyrimidine-DNA glycosylase (282 aa).

Proline 2 functions as the Schiff-base intermediate with DNA in the catalytic mechanism. Glutamate 3 (proton donor) is an active-site residue. Lysine 60 serves as the catalytic Proton donor; for beta-elimination activity. DNA-binding residues include histidine 99, arginine 118, and arginine 163. An FPG-type zinc finger spans residues 248-282 (WVYGRTGEPCRVCGTSIERLKLGGRSAHFCPRCQA). Arginine 272 acts as the Proton donor; for delta-elimination activity in catalysis.

It belongs to the FPG family. As to quaternary structure, monomer. Zn(2+) is required as a cofactor.

It catalyses the reaction Hydrolysis of DNA containing ring-opened 7-methylguanine residues, releasing 2,6-diamino-4-hydroxy-5-(N-methyl)formamidopyrimidine.. It carries out the reaction 2'-deoxyribonucleotide-(2'-deoxyribose 5'-phosphate)-2'-deoxyribonucleotide-DNA = a 3'-end 2'-deoxyribonucleotide-(2,3-dehydro-2,3-deoxyribose 5'-phosphate)-DNA + a 5'-end 5'-phospho-2'-deoxyribonucleoside-DNA + H(+). Its function is as follows. Involved in base excision repair of DNA damaged by oxidation or by mutagenic agents. Acts as a DNA glycosylase that recognizes and removes damaged bases. Has a preference for oxidized purines, such as 7,8-dihydro-8-oxoguanine (8-oxoG). Has AP (apurinic/apyrimidinic) lyase activity and introduces nicks in the DNA strand. Cleaves the DNA backbone by beta-delta elimination to generate a single-strand break at the site of the removed base with both 3'- and 5'-phosphates. In Rippkaea orientalis (strain PCC 8801 / RF-1) (Cyanothece sp. (strain PCC 8801)), this protein is Formamidopyrimidine-DNA glycosylase.